A 720-amino-acid chain; its full sequence is MPNTTEEQSDEVNNLALEKCLKVLQEAQTDNEQFAALLLVTKCAQAQEINNETRRRIFDAVGFTFPNRLLFSNSVPEGCPQNLFKSLGITLLACFSTDPVLAVHPQVVNKIPIFNETINISCQSGNKEVVSMVEDAYQCLLGILASPQGPKNLLSHGSIPYLCQAYMNRNHFWEKALQILTSLLTVLPPKCWKKSCTDLQLLLTRLSEEFGKEEGEWKFQLADLLPIFLPPSPILLETSWGKQCLKQLCKGLLKILSNKLSISQRDPALKLAACLANSYGSSWIMAENKVVRSRFLALIVNLACVEVRMALEEPEPLTSRQSVITACYALVEMGILACTKEEKHPVLGKEQKLQLIGVMQEACAAIIYYLQQVGWEKQEDPFLLASVRLLGAWLAEETACLKLEVIQLLPFLVHYMRTCHQRSVICSKLPKEVSQVALLSNSWGNIWPGDAIRFLLPALCHLSAEEVPRKVLISEGVPALLCDYFQLQWDVLFAEDEPEGLQSAAELSLQTCCGVFLNLVVTEPTFVGQESCFVSLMKLLMQSLPTLLTKEGHLVLVANFSTLGLMMSRLLAENSVLHESNAEEFFKAAIHFLSHSHVPSCQTDAGKPVITLSESYSEAWEEISELWFLGVQAFSSCVHLLPWLSALVLRSSWLQDTLCLLDNVSPKSVDSDLVTALQGMLTELAQSSSCCRDVIREKGGAEKANLYGMAALEQCLAELS.

This sequence belongs to the neurochondrin family.

Its subcellular location is the cytoplasm. The protein localises to the cytosol. It localises to the cell projection. It is found in the dendrite. The protein resides in the postsynapse. Probably involved in signal transduction, in the nervous system. Required for the spatial learning process. May also be involved in neurite outgrowth. This Xenopus laevis (African clawed frog) protein is Neurochondrin (ncdn).